Consider the following 600-residue polypeptide: Aspartate--tRNA(Asp/Asn) ligase (600 aa).

Glutamate 174 provides a ligand contact to L-aspartate. Positions 198-201 (QLFK) are aspartate. Arginine 220 provides a ligand contact to L-aspartate. ATP-binding positions include 220-222 (RDE) and glutamine 229. Histidine 457 lines the L-aspartate pocket. Glutamate 491 contacts ATP. L-aspartate is bound at residue arginine 498. 543-546 (GLDR) contacts ATP.

It belongs to the class-II aminoacyl-tRNA synthetase family. Type 1 subfamily. Homodimer.

Its subcellular location is the cytoplasm. The catalysed reaction is tRNA(Asx) + L-aspartate + ATP = L-aspartyl-tRNA(Asx) + AMP + diphosphate. Functionally, aspartyl-tRNA synthetase with relaxed tRNA specificity since it is able to aspartylate not only its cognate tRNA(Asp) but also tRNA(Asn). Reaction proceeds in two steps: L-aspartate is first activated by ATP to form Asp-AMP and then transferred to the acceptor end of tRNA(Asp/Asn). The sequence is that of Aspartate--tRNA(Asp/Asn) ligase from Burkholderia mallei (strain NCTC 10247).